A 279-amino-acid polypeptide reads, in one-letter code: Pantothenate synthetase (279 aa).

26-33 (MGALHSGH) contributes to the ATP binding site. The active-site Proton donor is the H33. Q57 provides a ligand contact to (R)-pantoate. Q57 is a beta-alanine binding site. 147 to 150 (GQKD) provides a ligand contact to ATP. Q153 provides a ligand contact to (R)-pantoate. Residues I176 and 184–187 (ESSR) each bind ATP.

Belongs to the pantothenate synthetase family. In terms of assembly, homodimer.

It is found in the cytoplasm. The enzyme catalyses (R)-pantoate + beta-alanine + ATP = (R)-pantothenate + AMP + diphosphate + H(+). It participates in cofactor biosynthesis; (R)-pantothenate biosynthesis; (R)-pantothenate from (R)-pantoate and beta-alanine: step 1/1. Its function is as follows. Catalyzes the condensation of pantoate with beta-alanine in an ATP-dependent reaction via a pantoyl-adenylate intermediate. The chain is Pantothenate synthetase from Corynebacterium glutamicum (strain R).